The sequence spans 414 residues: Tryptophan synthase beta chain (414 aa).

Residues 1-28 (MVSTISRQDQNNNDDLNQPSKEGRFGKY) form a disordered region. Positions 8 to 18 (QDQNNNDDLNQ) are enriched in low complexity. N6-(pyridoxal phosphate)lysine is present on Lys-108.

It belongs to the TrpB family. As to quaternary structure, tetramer of two alpha and two beta chains. Requires pyridoxal 5'-phosphate as cofactor.

The catalysed reaction is (1S,2R)-1-C-(indol-3-yl)glycerol 3-phosphate + L-serine = D-glyceraldehyde 3-phosphate + L-tryptophan + H2O. The protein operates within amino-acid biosynthesis; L-tryptophan biosynthesis; L-tryptophan from chorismate: step 5/5. Its function is as follows. The beta subunit is responsible for the synthesis of L-tryptophan from indole and L-serine. This Prochlorococcus marinus subsp. pastoris (strain CCMP1986 / NIES-2087 / MED4) protein is Tryptophan synthase beta chain.